We begin with the raw amino-acid sequence, 459 residues long: N-chimaerin (459 aa).

Residue A2 is modified to N-acetylalanine. The SH2 domain occupies 49–135 (EYHGMISREE…IETKAAEYIA (87 aa)). T192 is modified (phosphothreonine). A Phorbol-ester/DAG-type zinc finger spans residues 205–255 (VHNFKVHTFRGPHWCEYCANFMWGLIAQGVKCADCGLNVHKQCSKMVPNDC). Residues 268–459 (CDLTTLVKAH…LLIKNEDILF (192 aa)) enclose the Rho-GAP domain. A Phosphothreonine modification is found at T340.

As to quaternary structure, interacts with EPHA4; effector of EPHA4 in axon guidance linking EPHA4 activation to RAC1 regulation. May also interact with EPHB1 and EPHB2. Post-translationally, phosphorylated. Phosphorylation is EPHA4 kinase activity-dependent.

GTPase-activating protein for p21-rac and a phorbol ester receptor. May play an important role in neuronal signal-transduction mechanisms. Involved in the assembly of neuronal locomotor circuits as a direct effector of EPHA4 in axon guidance. The chain is N-chimaerin (Chn1) from Mus musculus (Mouse).